Consider the following 132-residue polypeptide: UPF0292 protein PYRAB04740 (132 aa).

The 81-residue stretch at 20 to 100 (DGAIIVEGPR…KVDTETRRSL (81 aa)) folds into the Toprim domain. Mg(2+) is bound by residues glutamate 26, aspartate 69, and aspartate 71.

It belongs to the UPF0292 family. Mg(2+) serves as cofactor.

The chain is UPF0292 protein PYRAB04740 from Pyrococcus abyssi (strain GE5 / Orsay).